A 175-amino-acid polypeptide reads, in one-letter code: ATP synthase subunit delta (175 aa).

This sequence belongs to the ATPase delta chain family. As to quaternary structure, F-type ATPases have 2 components, F(1) - the catalytic core - and F(0) - the membrane proton channel. F(1) has five subunits: alpha(3), beta(3), gamma(1), delta(1), epsilon(1). F(0) has three main subunits: a(1), b(2) and c(10-14). The alpha and beta chains form an alternating ring which encloses part of the gamma chain. F(1) is attached to F(0) by a central stalk formed by the gamma and epsilon chains, while a peripheral stalk is formed by the delta and b chains.

The protein resides in the cell membrane. In terms of biological role, f(1)F(0) ATP synthase produces ATP from ADP in the presence of a proton or sodium gradient. F-type ATPases consist of two structural domains, F(1) containing the extramembraneous catalytic core and F(0) containing the membrane proton channel, linked together by a central stalk and a peripheral stalk. During catalysis, ATP synthesis in the catalytic domain of F(1) is coupled via a rotary mechanism of the central stalk subunits to proton translocation. Its function is as follows. This protein is part of the stalk that links CF(0) to CF(1). It either transmits conformational changes from CF(0) to CF(1) or is implicated in proton conduction. This is ATP synthase subunit delta from Brevibacillus brevis (strain 47 / JCM 6285 / NBRC 100599).